The chain runs to 429 residues: Glutamate-1-semialdehyde 2,1-aminomutase 1 (429 aa).

Lys268 bears the N6-(pyridoxal phosphate)lysine mark.

The protein belongs to the class-III pyridoxal-phosphate-dependent aminotransferase family. HemL subfamily. As to quaternary structure, homodimer. Pyridoxal 5'-phosphate serves as cofactor.

It is found in the cytoplasm. It catalyses the reaction (S)-4-amino-5-oxopentanoate = 5-aminolevulinate. The protein operates within porphyrin-containing compound metabolism; protoporphyrin-IX biosynthesis; 5-aminolevulinate from L-glutamyl-tRNA(Glu): step 2/2. In Listeria innocua serovar 6a (strain ATCC BAA-680 / CLIP 11262), this protein is Glutamate-1-semialdehyde 2,1-aminomutase 1.